The chain runs to 403 residues: Dual-specificity RNA methyltransferase RlmN (403 aa).

Residues 1–25 (MTKIPMQPADSTPATFHPNAPTKTN) are disordered. The active-site Proton acceptor is the Glu-112. Residues 123–364 (VNGRKTLCIS…VCTIRQTRGD (242 aa)) form the Radical SAM core domain. Cys-130 and Cys-370 form a disulfide bridge. Positions 137, 141, and 144 each coordinate [4Fe-4S] cluster. S-adenosyl-L-methionine is bound by residues 193–194 (GE), Ser-225, 247–249 (SLH), and Asn-327. Catalysis depends on Cys-370, which acts as the S-methylcysteine intermediate.

This sequence belongs to the radical SAM superfamily. RlmN family. [4Fe-4S] cluster serves as cofactor.

The protein localises to the cytoplasm. The enzyme catalyses adenosine(2503) in 23S rRNA + 2 reduced [2Fe-2S]-[ferredoxin] + 2 S-adenosyl-L-methionine = 2-methyladenosine(2503) in 23S rRNA + 5'-deoxyadenosine + L-methionine + 2 oxidized [2Fe-2S]-[ferredoxin] + S-adenosyl-L-homocysteine. It carries out the reaction adenosine(37) in tRNA + 2 reduced [2Fe-2S]-[ferredoxin] + 2 S-adenosyl-L-methionine = 2-methyladenosine(37) in tRNA + 5'-deoxyadenosine + L-methionine + 2 oxidized [2Fe-2S]-[ferredoxin] + S-adenosyl-L-homocysteine. Specifically methylates position 2 of adenine 2503 in 23S rRNA and position 2 of adenine 37 in tRNAs. m2A2503 modification seems to play a crucial role in the proofreading step occurring at the peptidyl transferase center and thus would serve to optimize ribosomal fidelity. In Psychrobacter sp. (strain PRwf-1), this protein is Dual-specificity RNA methyltransferase RlmN.